The following is a 190-amino-acid chain: Translation machinery-associated protein 22 (190 aa).

The tract at residues 63–83 (LNVSGTKDSNAEEQPAKLTKE) is disordered. Positions 99-170 (VLIKTIERTK…DIFDFILEKF (72 aa)) constitute an SUI1 domain.

This sequence belongs to the DENR family. Interacts with the 40S ribosomal subunit.

The protein localises to the cytoplasm. The chain is Translation machinery-associated protein 22 (tma22) from Schizosaccharomyces pombe (strain 972 / ATCC 24843) (Fission yeast).